Consider the following 487-residue polypeptide: Citrate/succinate antiporter (487 aa).

The next 14 helical transmembrane spans lie at 11 to 31, 60 to 80, 95 to 115, 138 to 158, 190 to 210, 214 to 234, 237 to 257, 288 to 308, 309 to 329, 345 to 365, 379 to 399, 401 to 421, 424 to 444, and 463 to 483; these read LLAP…DGMP, FIAV…AKEL, GLAG…IFAL, TLTL…FTPS, IGGY…SMFV, APNV…ISWL, FLCF…LSYV, WTLI…SEVI, NATA…VVPW, LATL…DWFA, ATVI…ASLS, HTAT…GVPM, LCIL…YATG, and LGAI…WPIL.

Belongs to the SLC13A/DASS transporter (TC 2.A.47) family. DIT1 subfamily.

The protein resides in the cell inner membrane. In terms of biological role, responsible for the uptake of citrate in exchange to the efflux of succinate. Has a relatively broad specificity for C(4)-dicarboxylates and tricarboxylates. This is Citrate/succinate antiporter (citT) from Escherichia coli O157:H7.